Here is a 159-residue protein sequence, read N- to C-terminus: C-type lectin 1 (159 aa).

The first 23 residues, 1–23 (MGRFIFISFGLLVVFFFLSGAKG), serve as a signal peptide directing secretion. 4 disulfide bridges follow: cysteine 26/cysteine 37, cysteine 54/cysteine 155, cysteine 61/cysteine 157, and cysteine 130/cysteine 147. One can recognise a C-type lectin domain in the interval 33-156 (MYGLCYKIFD…CKVKNAFLCQ (124 aa)). N-linked (GlcNAc...) asparagine glycosylation occurs at asparagine 118. A Sugar-binding motif is present at residues 119 to 121 (LTD). Positions 121, 127, and 143 each coordinate Ca(2+).

This sequence belongs to the true venom lectin family. In terms of assembly, homodimer; disulfide-linked. In terms of tissue distribution, expressed by the venom gland.

The protein resides in the secreted. Its function is as follows. Lectin which recognizes specific carbohydrate structures and agglutinates a variety of animal cells by binding to cell-surface glycoproteins and glycolipids. May be a calcium-dependent lectin. In Bitis gabonica (Gaboon adder), this protein is C-type lectin 1.